The chain runs to 465 residues: Cysteine--tRNA ligase (465 aa).

A Zn(2+)-binding site is contributed by Cys-29. Residues 31 to 41 carry the 'HIGH' region motif; it reads PTVYNYIHIGN. Zn(2+) contacts are provided by Cys-209, His-234, and Glu-238. Positions 266–270 match the 'KMSKS' region motif; sequence KMSKS. Lys-269 lines the ATP pocket. Ser-270 bears the Phosphoserine mark.

Belongs to the class-I aminoacyl-tRNA synthetase family. Monomer. Requires Zn(2+) as cofactor.

Its subcellular location is the cytoplasm. The catalysed reaction is tRNA(Cys) + L-cysteine + ATP = L-cysteinyl-tRNA(Cys) + AMP + diphosphate. This Anoxybacillus flavithermus (strain DSM 21510 / WK1) protein is Cysteine--tRNA ligase.